The primary structure comprises 616 residues: Chaperone protein HscA homolog (616 aa).

Belongs to the heat shock protein 70 family.

Its function is as follows. Chaperone involved in the maturation of iron-sulfur cluster-containing proteins. Has a low intrinsic ATPase activity which is markedly stimulated by HscB. This is Chaperone protein HscA homolog from Histophilus somni (strain 2336) (Haemophilus somnus).